The following is a 348-amino-acid chain: Probable dual-specificity RNA methyltransferase RlmN (348 aa).

Glu-95 acts as the Proton acceptor in catalysis. One can recognise a Radical SAM core domain in the interval 101–335 (SGNRLTICVS…VSLRASRGLD (235 aa)). Cys-108 and Cys-340 are disulfide-bonded. [4Fe-4S] cluster contacts are provided by Cys-115, Cys-119, and Cys-122. Residues 162-163 (GE), Ser-192, 221-223 (SLH), and Asn-297 each bind S-adenosyl-L-methionine. Cys-340 (S-methylcysteine intermediate) is an active-site residue.

This sequence belongs to the radical SAM superfamily. RlmN family. [4Fe-4S] cluster serves as cofactor.

The protein localises to the cytoplasm. The catalysed reaction is adenosine(2503) in 23S rRNA + 2 reduced [2Fe-2S]-[ferredoxin] + 2 S-adenosyl-L-methionine = 2-methyladenosine(2503) in 23S rRNA + 5'-deoxyadenosine + L-methionine + 2 oxidized [2Fe-2S]-[ferredoxin] + S-adenosyl-L-homocysteine. It catalyses the reaction adenosine(37) in tRNA + 2 reduced [2Fe-2S]-[ferredoxin] + 2 S-adenosyl-L-methionine = 2-methyladenosine(37) in tRNA + 5'-deoxyadenosine + L-methionine + 2 oxidized [2Fe-2S]-[ferredoxin] + S-adenosyl-L-homocysteine. Specifically methylates position 2 of adenine 2503 in 23S rRNA and position 2 of adenine 37 in tRNAs. The sequence is that of Probable dual-specificity RNA methyltransferase RlmN from Prochlorococcus marinus (strain SARG / CCMP1375 / SS120).